Reading from the N-terminus, the 149-residue chain is MKLILREDVENLGKGGDLVDVKPGYGRNYLLPRGLAVSANPKNVKELEHQKAVAAAKAAKLKASAQAVAKRLSETPVTLKRKVGEQDKLYGSVTALDVAEALAARGVQLDRRSIVLDEPIKTLGEFEVPVKLHSEVAGKVKVTVEAEAE.

Belongs to the bacterial ribosomal protein bL9 family.

In terms of biological role, binds to the 23S rRNA. This is Large ribosomal subunit protein bL9 from Anaeromyxobacter dehalogenans (strain 2CP-C).